A 95-amino-acid polypeptide reads, in one-letter code: 6 kDa early secretory antigenic target (95 aa).

2 helical membrane passes run 11-43 (IEAAASAIQGNVTSIHSLLDEGKQSLTKLAAAW) and 49-85 (EAYQGVQQKWDATATELNNALQNLARTISEAGQAMAS). The stretch at 56–87 (QKWDATATELNNALQNLARTISEAGQAMASTE) forms a coiled coil.

It belongs to the WXG100 family. ESAT-6 subfamily. In terms of assembly, forms a tight 1:1 complex with EsxB (CFP-10).

The protein resides in the secreted. Its subcellular location is the host membrane. Its function is as follows. A secreted protein. Acts as a strong host T-cell antigen. Plays a number of roles in modulating the host's immune response to infection as well as being responsible for bacterial escape into the host cytoplasm. This is 6 kDa early secretory antigenic target (esxA) from Mycobacterium bovis (strain ATCC BAA-935 / AF2122/97).